Reading from the N-terminus, the 528-residue chain is Glucose-6-phosphate isomerase (528 aa).

Glu-322 acts as the Proton donor in catalysis. Active-site residues include His-351 and Lys-455.

The protein belongs to the GPI family.

Its subcellular location is the cytoplasm. It catalyses the reaction alpha-D-glucose 6-phosphate = beta-D-fructose 6-phosphate. The protein operates within carbohydrate biosynthesis; gluconeogenesis. It functions in the pathway carbohydrate degradation; glycolysis; D-glyceraldehyde 3-phosphate and glycerone phosphate from D-glucose: step 2/4. Catalyzes the reversible isomerization of glucose-6-phosphate to fructose-6-phosphate. The polypeptide is Glucose-6-phosphate isomerase (Trichormus variabilis (strain ATCC 29413 / PCC 7937) (Anabaena variabilis)).